The sequence spans 132 residues: Interleukin-4 (132 aa).

A signal peptide spans 1–24 (MGLTSQLIPTLVCLLALTSTFVHG). N-linked (GlcNAc...) asparagine glycans are attached at residues Asn28, Asn45, Asn62, Asn83, Asn95, and Asn101. Intrachain disulfides connect Cys48–Cys84 and Cys70–Cys104.

This sequence belongs to the IL-4/IL-13 family.

It is found in the secreted. Its function is as follows. Participates in at least several B-cell activation processes as well as of other cell types. It is a costimulator of DNA-synthesis. It induces the expression of class II MHC molecules on resting B-cells. It enhances both secretion and cell surface expression of IgE and IgG1. It also regulates the expression of the low affinity Fc receptor for IgE (CD23) on both lymphocytes and monocytes. Positively regulates IL31RA expression in macrophages. Stimulates autophagy in dendritic cells by interfering with mTORC1 signaling and through the induction of RUFY4. The chain is Interleukin-4 (IL4) from Canis lupus familiaris (Dog).